The primary structure comprises 286 residues: MQTINRLDDLRQAVDSLKNGGKTLAFVPTMGALHEGHLTLVREAARRADHVVASIFVNPRQFGPNEDLDAYPRRMATDAALLEAEGVALLWAPTVDQMYPDGYATNISVSGVSEVACGAARPGHFDGVATVVCKLFNQVRPDFALFGEKDWQQLAVIRRMARDLDLTQPHVDRIIGVPTVREDSGLALSSRNQYLSDTERAQATGLSAAMRRAIAAIEGGAEVASSLAELTREILAAGFVSVDYADLRDAATLEEVVRFEGRPARLLVAARIGGARLIDNMGVGPQ.

An ATP-binding site is contributed by 30–37 (MGALHEGH). The active-site Proton donor is histidine 37. Position 61 (glutamine 61) interacts with (R)-pantoate. Residue glutamine 61 coordinates beta-alanine. ATP is bound at residue 147 to 150 (GEKD). Glutamine 153 lines the (R)-pantoate pocket. Residues valine 180 and 188–191 (LSSR) contribute to the ATP site.

This sequence belongs to the pantothenate synthetase family. As to quaternary structure, homodimer.

Its subcellular location is the cytoplasm. It catalyses the reaction (R)-pantoate + beta-alanine + ATP = (R)-pantothenate + AMP + diphosphate + H(+). It functions in the pathway cofactor biosynthesis; (R)-pantothenate biosynthesis; (R)-pantothenate from (R)-pantoate and beta-alanine: step 1/1. Catalyzes the condensation of pantoate with beta-alanine in an ATP-dependent reaction via a pantoyl-adenylate intermediate. This is Pantothenate synthetase from Novosphingobium aromaticivorans (strain ATCC 700278 / DSM 12444 / CCUG 56034 / CIP 105152 / NBRC 16084 / F199).